The following is a 202-amino-acid chain: FMN reductase (NADH) RutF (202 aa).

Residues 168-191 (PRAPRGGSAPAEPARGARAIGARP) show a composition bias toward low complexity. Residues 168–202 (PRAPRGGSAPAEPARGARAIGARPPEGPVLALRSA) are disordered.

The protein belongs to the non-flavoprotein flavin reductase family. RutF subfamily.

The enzyme catalyses FMNH2 + NAD(+) = FMN + NADH + 2 H(+). Functionally, catalyzes the reduction of FMN to FMNH2 which is used to reduce pyrimidine by RutA via the Rut pathway. In Methylorubrum populi (strain ATCC BAA-705 / NCIMB 13946 / BJ001) (Methylobacterium populi), this protein is FMN reductase (NADH) RutF.